The chain runs to 570 residues: Probable metalloreductase AIM14 (570 aa).

Transmembrane regions (helical) follow at residues 21–41, 70–90, 101–118, 142–162, 177–197, 204–224, and 230–250; these read IKYG…LALL, AIHL…HYSL, LGRL…LTLR, IITV…AIDD, FVGF…IGPM, LFYI…PIHS, and FPFL…RIVF. The region spanning 101-219 is the Ferric oxidoreductase domain; that stretch reads LGRLSYALIP…NLVNVAFILL (119 aa). An FAD-binding FR-type domain is found at 250–388; the sequence is FAKSLMILNK…GGSGISFALP (139 aa). A compositionally biased stretch (polar residues) spans 481–505; it reads SNFNSENADSNDNTPETSHSPTKEN. The disordered stretch occupies residues 481 to 507; sequence SNFNSENADSNDNTPETSHSPTKENGS.

This sequence belongs to the ferric reductase (FRE) family. AIM14 subfamily. Interacts with ribosomes.

It is found in the membrane. Probable cell surface metalloreductase. May be involved in iron or copper homeostasis. The protein is Probable metalloreductase AIM14 (AIM14) of Saccharomyces cerevisiae (strain RM11-1a) (Baker's yeast).